A 432-amino-acid chain; its full sequence is 7-dehydrocholesterol reductase (432 aa).

9 helical membrane-spanning segments follow: residues Y12 to V34, L64 to G86, L107 to F126, G136 to I155, F195 to Y212, M227 to W249, F261 to V283, V287 to Y309, and S371 to L393.

The protein belongs to the ERG4/ERG24 family.

The protein localises to the endoplasmic reticulum membrane. The enzyme catalyses cholesterol + NADP(+) = 7-dehydrocholesterol + NADPH + H(+). Its pathway is lipid metabolism; steroid biosynthesis. Functionally, production of cholesterol by reduction of C7-C8 double bond of 7-dehydrocholesterol (7-DHC). Lesions in the gene coding for the enzyme cause dwarfism. The chain is 7-dehydrocholesterol reductase (DWF5) from Arabidopsis thaliana (Mouse-ear cress).